Here is a 236-residue protein sequence, read N- to C-terminus: Large ribosomal subunit protein uL1 (236 aa).

This sequence belongs to the universal ribosomal protein uL1 family. As to quaternary structure, part of the 50S ribosomal subunit.

Binds directly to 23S rRNA. The L1 stalk is quite mobile in the ribosome, and is involved in E site tRNA release. Functionally, protein L1 is also a translational repressor protein, it controls the translation of the L11 operon by binding to its mRNA. The chain is Large ribosomal subunit protein uL1 from Sorangium cellulosum (strain So ce56) (Polyangium cellulosum (strain So ce56)).